The chain runs to 429 residues: Phosphoribosylamine--glycine ligase (429 aa).

The ATP-grasp domain maps to 109 to 316 (KDFLARHNIP…LVELCQAAIA (208 aa)). 135–196 (VREKGAPIVV…EEFLDGEEAS (62 aa)) contacts ATP. The Mg(2+) site is built by E286 and N288.

It belongs to the GARS family. Mg(2+) serves as cofactor. Requires Mn(2+) as cofactor.

It carries out the reaction 5-phospho-beta-D-ribosylamine + glycine + ATP = N(1)-(5-phospho-beta-D-ribosyl)glycinamide + ADP + phosphate + H(+). Its pathway is purine metabolism; IMP biosynthesis via de novo pathway; N(1)-(5-phospho-D-ribosyl)glycinamide from 5-phospho-alpha-D-ribose 1-diphosphate: step 2/2. The polypeptide is Phosphoribosylamine--glycine ligase (Vibrio cholerae serotype O1 (strain ATCC 39315 / El Tor Inaba N16961)).